The sequence spans 101 residues: NADH-quinone oxidoreductase subunit K (101 aa).

The next 3 membrane-spanning stretches (helical) occupy residues 4-24, 30-50, and 65-85; these read LEHY…GIFL, IVIL…LVAF, and FVLT…VTFF.

This sequence belongs to the complex I subunit 4L family. As to quaternary structure, NDH-1 is composed of 14 different subunits. Subunits NuoA, H, J, K, L, M, N constitute the membrane sector of the complex.

Its subcellular location is the cell inner membrane. The enzyme catalyses a quinone + NADH + 5 H(+)(in) = a quinol + NAD(+) + 4 H(+)(out). In terms of biological role, NDH-1 shuttles electrons from NADH, via FMN and iron-sulfur (Fe-S) centers, to quinones in the respiratory chain. The immediate electron acceptor for the enzyme in this species is believed to be ubiquinone. Couples the redox reaction to proton translocation (for every two electrons transferred, four hydrogen ions are translocated across the cytoplasmic membrane), and thus conserves the redox energy in a proton gradient. This Cereibacter sphaeroides (strain ATCC 17029 / ATH 2.4.9) (Rhodobacter sphaeroides) protein is NADH-quinone oxidoreductase subunit K.